A 212-amino-acid chain; its full sequence is Pyridoxine/pyridoxamine 5'-phosphate oxidase (212 aa).

Residues 9–12 (RKSY) and Lys67 each bind substrate. FMN-binding positions include 62 to 67 (RIVLIK), 77 to 78 (FT), Arg83, and Lys84. The substrate site is built by Tyr124, Arg128, and Ser132. FMN is bound by residues 141–142 (QS) and Trp185. 191 to 193 (RLH) serves as a coordination point for substrate. Arg195 provides a ligand contact to FMN.

This sequence belongs to the pyridoxamine 5'-phosphate oxidase family. In terms of assembly, homodimer. The cofactor is FMN.

It catalyses the reaction pyridoxamine 5'-phosphate + O2 + H2O = pyridoxal 5'-phosphate + H2O2 + NH4(+). The catalysed reaction is pyridoxine 5'-phosphate + O2 = pyridoxal 5'-phosphate + H2O2. Its pathway is cofactor metabolism; pyridoxal 5'-phosphate salvage; pyridoxal 5'-phosphate from pyridoxamine 5'-phosphate: step 1/1. It functions in the pathway cofactor metabolism; pyridoxal 5'-phosphate salvage; pyridoxal 5'-phosphate from pyridoxine 5'-phosphate: step 1/1. Catalyzes the oxidation of either pyridoxine 5'-phosphate (PNP) or pyridoxamine 5'-phosphate (PMP) into pyridoxal 5'-phosphate (PLP). The chain is Pyridoxine/pyridoxamine 5'-phosphate oxidase from Verminephrobacter eiseniae (strain EF01-2).